A 454-amino-acid chain; its full sequence is CCA-adding enzyme (454 aa).

Residues serine 59 and arginine 62 each coordinate ATP. Serine 59 and arginine 62 together coordinate CTP. Positions 71, 73, and 125 each coordinate Mg(2+). Residues histidine 148, lysine 167, and tyrosine 176 each contribute to the ATP site. The CTP site is built by histidine 148, lysine 167, and tyrosine 176.

The protein belongs to the tRNA nucleotidyltransferase/poly(A) polymerase family. Archaeal CCA-adding enzyme subfamily. Homodimer. Mg(2+) serves as cofactor.

It carries out the reaction a tRNA precursor + 2 CTP + ATP = a tRNA with a 3' CCA end + 3 diphosphate. It catalyses the reaction a tRNA with a 3' CCA end + 2 CTP + ATP = a tRNA with a 3' CCACCA end + 3 diphosphate. In terms of biological role, catalyzes the addition and repair of the essential 3'-terminal CCA sequence in tRNAs without using a nucleic acid template. Adds these three nucleotides in the order of C, C, and A to the tRNA nucleotide-73, using CTP and ATP as substrates and producing inorganic pyrophosphate. tRNA 3'-terminal CCA addition is required both for tRNA processing and repair. Also involved in tRNA surveillance by mediating tandem CCA addition to generate a CCACCA at the 3' terminus of unstable tRNAs. While stable tRNAs receive only 3'-terminal CCA, unstable tRNAs are marked with CCACCA and rapidly degraded. The protein is CCA-adding enzyme of Methanosarcina barkeri (strain Fusaro / DSM 804).